Reading from the N-terminus, the 551-residue chain is HTH-type transcriptional regulator SgrR (551 aa).

The HTH marR-type domain occupies 1 to 116; that stretch reads MPSARLQQQF…LVSHLGRSFR (116 aa). The segment at residues 26–49 is a DNA-binding region (H-T-H motif); it reads LNELAALLSCSRRHMRTLLNTMQD. The interval 163 to 492 is solute-binding; it reads ELEADIAHHW…IDWQADAARW (330 aa).

Its function is as follows. Activates the small RNA gene sgrS under glucose-phosphate stress conditions as well as yfdZ. Represses its own transcription under both stress and non-stress conditions. Might act as a sensor of the intracellular accumulation of phosphoglucose by binding these molecules in its C-terminal solute-binding domain. This chain is HTH-type transcriptional regulator SgrR, found in Shigella boydii serotype 4 (strain Sb227).